We begin with the raw amino-acid sequence, 346 residues long: Protein FAF1 (346 aa).

2 disordered regions span residues 22–120 and 323–346; these read QFGS…LRSG and KRDI…KSRR. Basic and acidic residues predominate over residues 31–65; it reads FEDKTKNIRTEVDTRDSSGDEIDNSDHGSDFKDGT. Residues 72–85 are compositionally biased toward acidic residues; sequence SDEDSGNETAEENN.

Interacts with KRR1.

The protein resides in the nucleus. It is found in the nucleolus. In terms of biological role, required for pre-rRNA processing and 40S ribosomal subunit assembly. Seems to act in the processing of 35S rRNA at the A(0), A(1), and A(2) cleavage sites. This is Protein FAF1 (FAF1) from Saccharomyces cerevisiae (strain ATCC 204508 / S288c) (Baker's yeast).